The sequence spans 23 residues: Dermaseptin-4 (23 aa).

Glutamine amide is present on Gln-23.

In terms of tissue distribution, expressed by the skin glands.

It localises to the secreted. In terms of biological role, antimicrobial peptide, active against the Gram-positive bacterium S.aureus, and the Gram-negative bacteria E.coli and P.aeruginosa. Has hemolytic activity (5% hemolysis at 128 ug/ml). The protein is Dermaseptin-4 of Phyllomedusa tarsius (Brownbelly leaf frog).